Reading from the N-terminus, the 352-residue chain is AP2/ERF and B3 domain-containing transcription factor At1g51120 (352 aa).

The disordered stretch occupies residues 1 to 20 (MDEMSNVAKTTTETSGLTDS). Polar residues predominate over residues 7–20 (VAKTTTETSGLTDS). The segment at residues 46 to 103 (KFKGVVQQQNGHWGAQIYADHRRIWLGTFKSAHEAAAAYDSASIKLRSFDANSHRNFP) is a DNA-binding region (AP2/ERF). Positions 178–297 (FQKELTPSDV…KTFLMIDVHH (120 aa)) form a DNA-binding region, TF-B3.

Belongs to the AP2/ERF transcription factor family. RAV subfamily.

The protein localises to the nucleus. In terms of biological role, probably acts as a transcriptional activator. Binds to the GCC-box pathogenesis-related promoter element. May be involved in the regulation of gene expression by stress factors and by components of stress signal transduction pathways. This chain is AP2/ERF and B3 domain-containing transcription factor At1g51120, found in Arabidopsis thaliana (Mouse-ear cress).